The following is a 368-amino-acid chain: Probable multidrug ABC transporter permease YbhR (368 aa).

Residues 1–24 (MFHRLWTLIRKELQSLLREPQTRA) lie on the Cytoplasmic side of the membrane. A helical transmembrane segment spans residues 25–45 (ILILPVLIQVILFPFAATLEV). Topologically, residues 46–173 (TNATIAIYDE…WYNPNLDYKW (128 aa)) are periplasmic. Residues 129–366 (AQIAANYLQQ…SAAYAMFRRK (238 aa)) enclose the ABC transmembrane type-2 domain. Residues 174–194 (FVVPSLIAMITTIGVMIVTSL) form a helical membrane-spanning segment. Residues 195 to 222 (SVAREREQGTLDQLLVSPLTTWQIFIGK) lie on the Cytoplasmic side of the membrane. A helical membrane pass occupies residues 223-243 (AVPALIVATFQATIVLAIGIW). Residues 244-253 (AYQIPFAGSL) are Periplasmic-facing. A helical membrane pass occupies residues 254–274 (ALFYFTMVIYGLSLVGFGLLI). The Cytoplasmic segment spans residues 275-284 (SSLCSTQQQA). Residues 285-305 (FIGVFVFMMPAILLSGYVSPV) traverse the membrane as a helical segment. The Periplasmic segment spans residues 306 to 339 (ENMPVWLQNLTWINPIRHFTDITKQIYLKDASLD). The helical transmembrane segment at 340–360 (IVWNSLWPLLVITATTGSAAY) threads the bilayer. At 361–368 (AMFRRKVM) the chain is on the cytoplasmic side.

This sequence belongs to the ABC-2 integral membrane protein family. In terms of assembly, the complex is probably composed of two ATP-binding proteins (YbhF) and two transmembrane proteins (YbhR and YbhS).

The protein localises to the cell inner membrane. Part of the ABC transporter complex YbhFSR that could be involved in efflux of cefoperazone. Probably involved in the translocation of the substrate across the membrane. This is Probable multidrug ABC transporter permease YbhR (ybhR) from Escherichia coli O157:H7.